The chain runs to 365 residues: Chorismate synthase (365 aa).

R48 contacts NADP(+). Residues 125–127 (RSS), 238–239 (NA), G278, 293–297 (KPTSS), and R319 contribute to the FMN site.

This sequence belongs to the chorismate synthase family. Homotetramer. The cofactor is FMNH2.

It carries out the reaction 5-O-(1-carboxyvinyl)-3-phosphoshikimate = chorismate + phosphate. It participates in metabolic intermediate biosynthesis; chorismate biosynthesis; chorismate from D-erythrose 4-phosphate and phosphoenolpyruvate: step 7/7. Its function is as follows. Catalyzes the anti-1,4-elimination of the C-3 phosphate and the C-6 proR hydrogen from 5-enolpyruvylshikimate-3-phosphate (EPSP) to yield chorismate, which is the branch point compound that serves as the starting substrate for the three terminal pathways of aromatic amino acid biosynthesis. This reaction introduces a second double bond into the aromatic ring system. This is Chorismate synthase from Ruthia magnifica subsp. Calyptogena magnifica.